The following is a 425-amino-acid chain: MLDIRFVRANPDAIREDLKKRNDMEKLAWIDDLLVQDIRHRELIGQTNELRRRRNSISYDINRAKKAGEDASALIAEAAGLPGRIKENEAEMEEISKKIRYYLMRIPNILHESVPVGADDTQNVEVKRYGTPRTFTFELKNHGQLAADNDWADFERATKTSGAGFYFLKGNLVLLDLALQRFSLDILMEKGYTPIIPPYMINRKSYEEVTDLDDFEKVMYKIEDDDAYLIATSEHPMAAMYQDEIFEEKDLPLRLAGLSPCFRREIGSHGLDTKGLFRVHQFHKVEQFVYCHPDDSWTIHEELRENAEEIFQKLEIPYRVVNICTGDIGTVAAKKYDIEAWMPRENEYREVVSCSNCTTYQAVRLNIRVRDKEDFESKQFVHTLNSTAIATSRAMRAILENNQQEDGSVVIPKVLRPYMNDKEFL.

L-serine is bound at residue Thr232–Glu234. Residues Arg263–Glu265 and Val279 each bind ATP. Glu286 serves as a coordination point for L-serine. Residue Glu350–Ser353 participates in ATP binding. Thr387 is an L-serine binding site.

Belongs to the class-II aminoacyl-tRNA synthetase family. Type-1 seryl-tRNA synthetase subfamily. In terms of assembly, homodimer. The tRNA molecule binds across the dimer.

The protein resides in the cytoplasm. The catalysed reaction is tRNA(Ser) + L-serine + ATP = L-seryl-tRNA(Ser) + AMP + diphosphate + H(+). It carries out the reaction tRNA(Sec) + L-serine + ATP = L-seryl-tRNA(Sec) + AMP + diphosphate + H(+). The protein operates within aminoacyl-tRNA biosynthesis; selenocysteinyl-tRNA(Sec) biosynthesis; L-seryl-tRNA(Sec) from L-serine and tRNA(Sec): step 1/1. Its function is as follows. Catalyzes the attachment of serine to tRNA(Ser). Is also able to aminoacylate tRNA(Sec) with serine, to form the misacylated tRNA L-seryl-tRNA(Sec), which will be further converted into selenocysteinyl-tRNA(Sec). In Methanospirillum hungatei JF-1 (strain ATCC 27890 / DSM 864 / NBRC 100397 / JF-1), this protein is Serine--tRNA ligase.